A 291-amino-acid polypeptide reads, in one-letter code: ATP synthase subunit a (291 aa).

The next 6 membrane-spanning stretches (helical) occupy residues phenylalanine 51–valine 71, phenylalanine 117–isoleucine 137, histidine 146–phenylalanine 166, phenylalanine 173–leucine 193, methionine 213–methionine 233, and phenylalanine 239–valine 259.

Belongs to the ATPase A chain family. In terms of assembly, F-type ATPases have 2 components, CF(1) - the catalytic core - and CF(0) - the membrane proton channel. CF(1) has five subunits: alpha(3), beta(3), gamma(1), delta(1), epsilon(1). CF(0) has three main subunits: a, b and c.

The protein localises to the mitochondrion inner membrane. In terms of biological role, mitochondrial membrane ATP synthase (F(1)F(0) ATP synthase or Complex V) produces ATP from ADP in the presence of a proton gradient across the membrane which is generated by electron transport complexes of the respiratory chain. F-type ATPases consist of two structural domains, F(1) - containing the extramembraneous catalytic core and F(0) - containing the membrane proton channel, linked together by a central stalk and a peripheral stalk. During catalysis, ATP synthesis in the catalytic domain of F(1) is coupled via a rotary mechanism of the central stalk subunits to proton translocation. Key component of the proton channel; it may play a direct role in the translocation of protons across the membrane. The chain is ATP synthase subunit a (ATP6) from Vicia faba (Broad bean).